Reading from the N-terminus, the 412-residue chain is Phosphoribosylamine--glycine ligase (412 aa).

One can recognise an ATP-grasp domain in the interval K108 to A309. L134–S190 contributes to the ATP binding site. Residues E279 and N281 each contribute to the Mg(2+) site.

The protein belongs to the GARS family. It depends on Mg(2+) as a cofactor. Mn(2+) is required as a cofactor.

It catalyses the reaction 5-phospho-beta-D-ribosylamine + glycine + ATP = N(1)-(5-phospho-beta-D-ribosyl)glycinamide + ADP + phosphate + H(+). It functions in the pathway purine metabolism; IMP biosynthesis via de novo pathway; N(1)-(5-phospho-D-ribosyl)glycinamide from 5-phospho-alpha-D-ribose 1-diphosphate: step 2/2. In Lactococcus lactis subsp. lactis (strain IL1403) (Streptococcus lactis), this protein is Phosphoribosylamine--glycine ligase.